The chain runs to 305 residues: Methionyl-tRNA formyltransferase (305 aa).

111-114 is a binding site for (6S)-5,6,7,8-tetrahydrofolate; sequence SILP.

It belongs to the Fmt family.

The enzyme catalyses L-methionyl-tRNA(fMet) + (6R)-10-formyltetrahydrofolate = N-formyl-L-methionyl-tRNA(fMet) + (6S)-5,6,7,8-tetrahydrofolate + H(+). In terms of biological role, attaches a formyl group to the free amino group of methionyl-tRNA(fMet). The formyl group appears to play a dual role in the initiator identity of N-formylmethionyl-tRNA by promoting its recognition by IF2 and preventing the misappropriation of this tRNA by the elongation apparatus. This Wolinella succinogenes (strain ATCC 29543 / DSM 1740 / CCUG 13145 / JCM 31913 / LMG 7466 / NCTC 11488 / FDC 602W) (Vibrio succinogenes) protein is Methionyl-tRNA formyltransferase.